Reading from the N-terminus, the 615-residue chain is Leucine aminopeptidase 2 (615 aa).

A peptide-binding positions include 139-141 (QCQ) and 271-276 (PYGGME). Residue His-300 participates in Zn(2+) binding. Glu-301 functions as the Proton acceptor in the catalytic mechanism. 2 residues coordinate Zn(2+): His-304 and Glu-323. Residue Tyr-386 is the Proton donor of the active site.

The protein belongs to the peptidase M1 family. Zn(2+) is required as a cofactor.

The protein localises to the cytoplasm. It localises to the nucleus. The enzyme catalyses an epoxide + H2O = an ethanediol. Aminopeptidase that preferentially cleaves di- and tripeptides. Also has low epoxide hydrolase activity (in vitro). Can hydrolyze the epoxide leukotriene LTA(4) but it forms preferentially 5,6-dihydroxy-7,9,11,14-eicosatetraenoic acid rather than the cytokine leukotriene B(4) as the product compared to the homologous mammalian enzyme (in vitro). This Aspergillus oryzae (strain ATCC 42149 / RIB 40) (Yellow koji mold) protein is Leucine aminopeptidase 2.